Consider the following 126-residue polypeptide: Probable S-adenosyl-L-methionine-binding protein MJ1583 (126 aa).

One can recognise a TsaA-like domain in the interval Leu4 to Ile126. S-adenosyl-L-methionine is bound by residues His45–Lys46, Arg75, and Tyr106–Thr109.

This sequence belongs to the tRNA methyltransferase O family.

The chain is Probable S-adenosyl-L-methionine-binding protein MJ1583 from Methanocaldococcus jannaschii (strain ATCC 43067 / DSM 2661 / JAL-1 / JCM 10045 / NBRC 100440) (Methanococcus jannaschii).